Here is a 224-residue protein sequence, read N- to C-terminus: Thiamine-phosphate synthase (224 aa).

4-amino-2-methyl-5-(diphosphooxymethyl)pyrimidine-binding positions include 44–48 (QFREK) and asparagine 79. The Mg(2+) site is built by aspartate 80 and aspartate 99. Serine 117 contacts 4-amino-2-methyl-5-(diphosphooxymethyl)pyrimidine. 143–145 (TET) lines the 2-[(2R,5Z)-2-carboxy-4-methylthiazol-5(2H)-ylidene]ethyl phosphate pocket. A 4-amino-2-methyl-5-(diphosphooxymethyl)pyrimidine-binding site is contributed by lysine 146. 2-[(2R,5Z)-2-carboxy-4-methylthiazol-5(2H)-ylidene]ethyl phosphate-binding positions include glycine 175 and 195-196 (IS).

It belongs to the thiamine-phosphate synthase family. Mg(2+) serves as cofactor.

The catalysed reaction is 2-[(2R,5Z)-2-carboxy-4-methylthiazol-5(2H)-ylidene]ethyl phosphate + 4-amino-2-methyl-5-(diphosphooxymethyl)pyrimidine + 2 H(+) = thiamine phosphate + CO2 + diphosphate. The enzyme catalyses 2-(2-carboxy-4-methylthiazol-5-yl)ethyl phosphate + 4-amino-2-methyl-5-(diphosphooxymethyl)pyrimidine + 2 H(+) = thiamine phosphate + CO2 + diphosphate. It catalyses the reaction 4-methyl-5-(2-phosphooxyethyl)-thiazole + 4-amino-2-methyl-5-(diphosphooxymethyl)pyrimidine + H(+) = thiamine phosphate + diphosphate. It functions in the pathway cofactor biosynthesis; thiamine diphosphate biosynthesis; thiamine phosphate from 4-amino-2-methyl-5-diphosphomethylpyrimidine and 4-methyl-5-(2-phosphoethyl)-thiazole: step 1/1. Condenses 4-methyl-5-(beta-hydroxyethyl)thiazole monophosphate (THZ-P) and 2-methyl-4-amino-5-hydroxymethyl pyrimidine pyrophosphate (HMP-PP) to form thiamine monophosphate (TMP). In Bacillus licheniformis (strain ATCC 14580 / DSM 13 / JCM 2505 / CCUG 7422 / NBRC 12200 / NCIMB 9375 / NCTC 10341 / NRRL NRS-1264 / Gibson 46), this protein is Thiamine-phosphate synthase.